The sequence spans 301 residues: GTPase Era (301 aa).

The Era-type G domain occupies 7-175 (YCGFVAIVGR…AAIVRKHLPE (169 aa)). Positions 15–22 (GRPNVGKS) are G1. 15–22 (GRPNVGKS) contacts GTP. Residues 41–45 (QTTRH) are G2. The segment at 62-65 (DTPG) is G3. Residues 62-66 (DTPGL) and 124-127 (NKVD) each bind GTP. Residues 124–127 (NKVD) form a G4 region. The interval 154-156 (ISA) is G5. A KH type-2 domain is found at 206–283 (LGAELPYSVT…HLELWVKVKS (78 aa)).

The protein belongs to the TRAFAC class TrmE-Era-EngA-EngB-Septin-like GTPase superfamily. Era GTPase family. In terms of assembly, monomer.

The protein resides in the cytoplasm. Its subcellular location is the cell inner membrane. An essential GTPase that binds both GDP and GTP, with rapid nucleotide exchange. Plays a role in 16S rRNA processing and 30S ribosomal subunit biogenesis and possibly also in cell cycle regulation and energy metabolism. The sequence is that of GTPase Era from Klebsiella pneumoniae subsp. pneumoniae (strain ATCC 700721 / MGH 78578).